We begin with the raw amino-acid sequence, 629 residues long: Nicotinic receptor-associated protein 1 (629 aa).

2 C2 domains span residues M1–L144 and R162–L299. Positions 33, 39, 108, 110, 122, 192, 198, 254, 256, and 274 each coordinate Ca(2+). The VWFA domain occupies E342–L561. Disordered stretches follow at residues G581–Y600 and I607–Y629.

It belongs to the copine family. In terms of assembly, interacts with nicotinic acetylcholine receptor. The cofactor is Ca(2+).

It localises to the cell membrane. Functionally, exhibits calcium-dependent phospholipid binding properties. May function in membrane trafficking. Regulates synaptic levels of nicotinic acetylcholine receptor subunit lev-1 and unc-38 in the nerve cord. Involved in nicotinic acetylcholine receptor (nAChR)-mediated sensitivity to nicotine and levamisole. Affects directional sperm motility. This chain is Nicotinic receptor-associated protein 1, found in Caenorhabditis briggsae.